Here is a 248-residue protein sequence, read N- to C-terminus: mRNA-decapping protein OPG122 (248 aa).

Residues 45 to 227 form the Nudix hydrolase domain; sequence HKRVSVSAIL…IAKYALDTAK (183 aa). Residues 125–147 carry the Nudix box motif; that stretch reads GGIPKRGENVPECLSREIKEEVN.

It belongs to the Nudix hydrolase family. In terms of assembly, interacts with the late transcription elongation factor VLTF-4/OPG110. Interacts with the late transcription factors VLTF-1. Mg(2+) is required as a cofactor. Mn(2+) serves as cofactor.

Its subcellular location is the host mitochondrion. Functionally, acts with RNA polymerase to initiate transcription from late gene promoters. This Cynomys gunnisoni (Gunnison's prairie dog) protein is mRNA-decapping protein OPG122 (OPG122).